Reading from the N-terminus, the 353-residue chain is D-alanine--D-alanine ligase (353 aa).

The region spanning 141-349 (KAAFAAAGLP…LPDLVAQLVH (209 aa)) is the ATP-grasp domain. Residue 176-231 (EAELGYPCFVKPANMGSSVGISKARHRDQLLAGLKEAARHDTRLVVEHGVSARELE) coordinates ATP. The Mg(2+) site is built by aspartate 302, glutamate 316, and asparagine 318.

It belongs to the D-alanine--D-alanine ligase family. It depends on Mg(2+) as a cofactor. Requires Mn(2+) as cofactor.

The protein localises to the cytoplasm. The enzyme catalyses 2 D-alanine + ATP = D-alanyl-D-alanine + ADP + phosphate + H(+). It participates in cell wall biogenesis; peptidoglycan biosynthesis. Its function is as follows. Cell wall formation. This chain is D-alanine--D-alanine ligase, found in Synechococcus sp. (strain CC9311).